The sequence spans 193 residues: Endoribonuclease YbeY (193 aa).

Zn(2+)-binding residues include histidine 109, histidine 113, and histidine 119. The interval 143–193 is disordered; that stretch reads GAALREGRREGRAGEAKDRWTRSPTSISTPSRSGSTARGSRAKTSRAGSRT. Over residues 147 to 163 the composition is skewed to basic and acidic residues; the sequence is REGRREGRAGEAKDRWT. Low complexity predominate over residues 164–181; sequence RSPTSISTPSRSGSTARG.

The protein belongs to the endoribonuclease YbeY family. It depends on Zn(2+) as a cofactor.

Its subcellular location is the cytoplasm. Single strand-specific metallo-endoribonuclease involved in late-stage 70S ribosome quality control and in maturation of the 3' terminus of the 16S rRNA. The chain is Endoribonuclease YbeY from Anaeromyxobacter dehalogenans (strain 2CP-C).